The primary structure comprises 255 residues: Methylthioribulose-1-phosphate dehydratase (255 aa).

Cys111 is a substrate binding site. Residues His128 and His130 each contribute to the Zn(2+) site. Residue Glu157 is the Proton donor/acceptor of the active site. Residue His213 coordinates Zn(2+).

Belongs to the aldolase class II family. MtnB subfamily. Zn(2+) serves as cofactor.

The protein resides in the cytoplasm. It catalyses the reaction 5-(methylsulfanyl)-D-ribulose 1-phosphate = 5-methylsulfanyl-2,3-dioxopentyl phosphate + H2O. Its pathway is amino-acid biosynthesis; L-methionine biosynthesis via salvage pathway; L-methionine from S-methyl-5-thio-alpha-D-ribose 1-phosphate: step 2/6. Its function is as follows. Catalyzes the dehydration of methylthioribulose-1-phosphate (MTRu-1-P) into 2,3-diketo-5-methylthiopentyl-1-phosphate (DK-MTP-1-P). The polypeptide is Methylthioribulose-1-phosphate dehydratase (Talaromyces stipitatus (strain ATCC 10500 / CBS 375.48 / QM 6759 / NRRL 1006) (Penicillium stipitatum)).